A 311-amino-acid chain; its full sequence is DNA-directed RNA polymerase subunit alpha (311 aa).

The segment at 1-228 (MQYQIERIDH…ELFQPLATVT (228 aa)) is alpha N-terminal domain (alpha-NTD). The segment at 239–311 (PSPEAQIPLE…ISIPQSRTSV (73 aa)) is alpha C-terminal domain (alpha-CTD).

This sequence belongs to the RNA polymerase alpha chain family. In cyanobacteria the RNAP catalytic core is composed of 2 alpha, 1 beta, 1 beta', 1 gamma and 1 omega subunit. When a sigma factor is associated with the core the holoenzyme is formed, which can initiate transcription.

It carries out the reaction RNA(n) + a ribonucleoside 5'-triphosphate = RNA(n+1) + diphosphate. DNA-dependent RNA polymerase catalyzes the transcription of DNA into RNA using the four ribonucleoside triphosphates as substrates. The protein is DNA-directed RNA polymerase subunit alpha of Prochlorococcus marinus (strain MIT 9312).